A 559-amino-acid polypeptide reads, in one-letter code: Urocanate hydratase (559 aa).

Residues 50 to 51, Gln128, 174 to 176, Asp194, Arg199, 240 to 241, 261 to 265, 271 to 272, and Tyr320 each bind NAD(+); these read GG, GMG, NA, QTSAH, and YI. The active site involves Cys408. Gly490 serves as a coordination point for NAD(+).

It belongs to the urocanase family. Requires NAD(+) as cofactor.

Its subcellular location is the cytoplasm. The catalysed reaction is 4-imidazolone-5-propanoate = trans-urocanate + H2O. It functions in the pathway amino-acid degradation; L-histidine degradation into L-glutamate; N-formimidoyl-L-glutamate from L-histidine: step 2/3. Its function is as follows. Catalyzes the conversion of urocanate to 4-imidazolone-5-propionate. In Halalkalibacterium halodurans (strain ATCC BAA-125 / DSM 18197 / FERM 7344 / JCM 9153 / C-125) (Bacillus halodurans), this protein is Urocanate hydratase.